The following is a 314-amino-acid chain: Porphobilinogen deaminase (314 aa).

Residue cysteine 241 is modified to S-(dipyrrolylmethanemethyl)cysteine.

Belongs to the HMBS family. In terms of assembly, monomer. Dipyrromethane is required as a cofactor.

The catalysed reaction is 4 porphobilinogen + H2O = hydroxymethylbilane + 4 NH4(+). Its pathway is porphyrin-containing compound metabolism; protoporphyrin-IX biosynthesis; coproporphyrinogen-III from 5-aminolevulinate: step 2/4. It participates in porphyrin-containing compound metabolism; chlorophyll biosynthesis. Its function is as follows. Tetrapolymerization of the monopyrrole PBG into the hydroxymethylbilane pre-uroporphyrinogen in several discrete steps. In Chloroherpeton thalassium (strain ATCC 35110 / GB-78), this protein is Porphobilinogen deaminase.